Reading from the N-terminus, the 140-residue chain is Profilin (140 aa).

Ser-2 is subject to N-acetylserine.

This sequence belongs to the profilin family. In terms of assembly, occurs in many kinds of cells as a complex with monomeric actin in a 1:1 ratio.

The protein resides in the cytoplasm. It localises to the cytoskeleton. In terms of biological role, binds to actin and affects the structure of the cytoskeleton. At high concentrations, profilin prevents the polymerization of actin, whereas it enhances it at low concentrations. By binding to PIP2, it inhibits the formation of IP3 and DG. In Heliocidaris crassispina (Sea urchin), this protein is Profilin.